Reading from the N-terminus, the 133-residue chain is Small ribosomal subunit protein uS11 (133 aa).

It belongs to the universal ribosomal protein uS11 family. Part of the 30S ribosomal subunit. Interacts with proteins S7 and S18. Binds to IF-3.

Its function is as follows. Located on the platform of the 30S subunit, it bridges several disparate RNA helices of the 16S rRNA. Forms part of the Shine-Dalgarno cleft in the 70S ribosome. The sequence is that of Small ribosomal subunit protein uS11 from Christiangramia forsetii (strain DSM 17595 / CGMCC 1.15422 / KT0803) (Gramella forsetii).